The primary structure comprises 205 residues: uncharacterized protein (205 aa).

Residues 1-42 (MSRKRDKPYTNRHTPARISKRRRPWAPSSSEHDEIIDKPITK) are disordered. A compositionally biased stretch (basic residues) spans 14 to 24 (TPARISKRRRP). Basic and acidic residues predominate over residues 30-40 (SEHDEIIDKPI). The region spanning 47-122 (PALVVMGLPA…KKLEVVWATD (76 aa)) is the RRM domain. Positions 170–191 (PRSDNTKGISGDGGISSPATTS) are disordered.

This is an uncharacterized protein from Arabidopsis thaliana (Mouse-ear cress).